A 423-amino-acid polypeptide reads, in one-letter code: MVSNQDYTEKIRQLMKDHNSWMESSINLIASENITSSRVKEALLSDLSHRYAEGLPGERLYEGCRYIDEIEELTIELSKRLFRAEHANVQPTSGVVANLACFFATAEVGDPIMAMEVPYGGHISHARVSAAGVRGFQIYTHPFDFENMNIDADAMKKKILEVKPRIILFGGSLFLFPHPVEEALEAAEEVGARIMYDGAHVLGLIAGGYFQDPLREGADMLVGSTHKTFPGPQGGIILCREELAADIDEAVFPGLVSNHHLHHVAGLGIATAEMLEFGAEYAAQTINNARKLAENLHELGFNVLCEHLDFTESHQVVMDVSDIGRAAEISKRLEANNIILNKNLLPWDDVNRSDDPSGIRIGTQEITRRGMKESEMSEVAEYIKRVVMDGKDVRDEVAEFMSSYTRVHYAFEDSEAYKYMEIQ.

121–123 provides a ligand contact to (6S)-5,6,7,8-tetrahydrofolate; sequence GHI. An N6-(pyridoxal phosphate)lysine modification is found at Lys-227. (6S)-5,6,7,8-tetrahydrofolate is bound at residue Glu-242.

This sequence belongs to the SHMT family. Homodimer. The cofactor is pyridoxal 5'-phosphate.

The protein localises to the cytoplasm. The enzyme catalyses 5,10-methylenetetrahydromethanopterin + glycine + H2O = 5,6,7,8-tetrahydromethanopterin + L-serine. The protein operates within amino-acid biosynthesis; glycine biosynthesis; glycine from L-serine: step 1/1. In terms of biological role, catalyzes the reversible interconversion of serine and glycine with tetrahydromethanopterin (H4MPT) serving as the one-carbon carrier. Cannot use tetrahydrofolate (THF or H4PteGlu) instead of H4MPT as the pteridine substrate. Also probably exhibits a pteridine-independent aldolase activity toward beta-hydroxyamino acids, producing glycine and aldehydes, via a retro-aldol mechanism. The polypeptide is Serine hydroxymethyltransferase (Methanothermobacter thermautotrophicus (strain ATCC 29096 / DSM 1053 / JCM 10044 / NBRC 100330 / Delta H) (Methanobacterium thermoautotrophicum)).